Reading from the N-terminus, the 258-residue chain is Proteasome subunit alpha (258 aa).

It belongs to the peptidase T1A family. In terms of assembly, the 20S proteasome core is composed of 14 alpha and 14 beta subunits that assemble into four stacked heptameric rings, resulting in a barrel-shaped structure. The two inner rings, each composed of seven catalytic beta subunits, are sandwiched by two outer rings, each composed of seven alpha subunits. The catalytic chamber with the active sites is on the inside of the barrel. Has a gated structure, the ends of the cylinder being occluded by the N-termini of the alpha-subunits. Is capped at one or both ends by the proteasome regulatory ATPase, PAN.

The protein localises to the cytoplasm. Its activity is regulated as follows. The formation of the proteasomal ATPase PAN-20S proteasome complex, via the docking of the C-termini of PAN into the intersubunit pockets in the alpha-rings, triggers opening of the gate for substrate entry. Interconversion between the open-gate and close-gate conformations leads to a dynamic regulation of the 20S proteasome proteolysis activity. Component of the proteasome core, a large protease complex with broad specificity involved in protein degradation. This is Proteasome subunit alpha from Aeropyrum pernix (strain ATCC 700893 / DSM 11879 / JCM 9820 / NBRC 100138 / K1).